We begin with the raw amino-acid sequence, 167 residues long: MTAEDLPYRPCVGVMVLNRQGLVWAGHRLAVGNSEYDGSPQLWQMPQGGIDEGEDPLEAACRELYEETGIRSVSLLAEAPDWIHYDLPSHLIGIGLKGKYRGQRQRWYAFRFEGDESEIAINPPPGGHEPEFDAWEWKPMHELPGSIVPFKRRAYEEVVAAFSHLVR.

The Nudix hydrolase domain maps to 7-160 (PYRPCVGVMV…KRRAYEEVVA (154 aa)). Positions 48–69 (GGIDEGEDPLEAACRELYEETG) match the Nudix box motif.

Belongs to the Nudix hydrolase family. RppH subfamily. A divalent metal cation is required as a cofactor.

Functionally, accelerates the degradation of transcripts by removing pyrophosphate from the 5'-end of triphosphorylated RNA, leading to a more labile monophosphorylated state that can stimulate subsequent ribonuclease cleavage. The chain is RNA pyrophosphohydrolase from Rhizobium meliloti (strain 1021) (Ensifer meliloti).